Reading from the N-terminus, the 357-residue chain is Ribonuclease 3 (357 aa).

Positions 6-155 (IKFIQDQIGY…ILGAIALDSN (150 aa)) constitute an RNase III domain. Mg(2+) is bound at residue glutamate 45. The active site involves aspartate 49. The Mg(2+) site is built by aspartate 141 and glutamate 144. The active site involves glutamate 144. DRBM domains follow at residues 198-267 (PLHC…YLKD) and 285-355 (DSIG…FVLE).

It belongs to the ribonuclease III family. In terms of assembly, homodimer. The cofactor is Mg(2+).

The protein resides in the cytoplasm. It carries out the reaction Endonucleolytic cleavage to 5'-phosphomonoester.. Functionally, digests double-stranded RNA. Involved in the processing of primary rRNA transcript to yield the immediate precursors to the large and small rRNAs (23S and 16S). Processes some mRNAs, and tRNAs when they are encoded in the rRNA operon. Processes pre-crRNA and tracrRNA of type II CRISPR loci if present in the organism. This Roseburia hominis (strain DSM 16839 / JCM 17582 / NCIMB 14029 / A2-183) protein is Ribonuclease 3 (rnc).